Reading from the N-terminus, the 406-residue chain is CCA-adding enzyme (406 aa).

ATP contacts are provided by Gly32 and Arg35. CTP is bound by residues Gly32 and Arg35. Asp45 and Asp47 together coordinate Mg(2+). Residues Arg116, Asp159, Arg162, Arg165, and Arg168 each coordinate ATP. The CTP site is built by Arg116, Asp159, Arg162, Arg165, and Arg168.

This sequence belongs to the tRNA nucleotidyltransferase/poly(A) polymerase family. Bacterial CCA-adding enzyme type 3 subfamily. Homodimer. Requires Mg(2+) as cofactor.

The enzyme catalyses a tRNA precursor + 2 CTP + ATP = a tRNA with a 3' CCA end + 3 diphosphate. It catalyses the reaction a tRNA with a 3' CCA end + 2 CTP + ATP = a tRNA with a 3' CCACCA end + 3 diphosphate. In terms of biological role, catalyzes the addition and repair of the essential 3'-terminal CCA sequence in tRNAs without using a nucleic acid template. Adds these three nucleotides in the order of C, C, and A to the tRNA nucleotide-73, using CTP and ATP as substrates and producing inorganic pyrophosphate. tRNA 3'-terminal CCA addition is required both for tRNA processing and repair. Also involved in tRNA surveillance by mediating tandem CCA addition to generate a CCACCA at the 3' terminus of unstable tRNAs. While stable tRNAs receive only 3'-terminal CCA, unstable tRNAs are marked with CCACCA and rapidly degraded. The polypeptide is CCA-adding enzyme (Enterococcus faecalis (strain ATCC 700802 / V583)).